Reading from the N-terminus, the 428-residue chain is 3-phosphoshikimate 1-carboxyvinyltransferase (428 aa).

3-phosphoshikimate is bound by residues lysine 22, serine 23, and arginine 27. Position 22 (lysine 22) interacts with phosphoenolpyruvate. Phosphoenolpyruvate-binding residues include glycine 96 and arginine 124. The 3-phosphoshikimate site is built by serine 170, serine 171, glutamine 172, serine 198, aspartate 314, asparagine 337, and lysine 341. A phosphoenolpyruvate-binding site is contributed by glutamine 172. Catalysis depends on aspartate 314, which acts as the Proton acceptor. Residues arginine 345, arginine 387, and lysine 412 each coordinate phosphoenolpyruvate.

Belongs to the EPSP synthase family. Monomer.

It is found in the cytoplasm. The catalysed reaction is 3-phosphoshikimate + phosphoenolpyruvate = 5-O-(1-carboxyvinyl)-3-phosphoshikimate + phosphate. The protein operates within metabolic intermediate biosynthesis; chorismate biosynthesis; chorismate from D-erythrose 4-phosphate and phosphoenolpyruvate: step 6/7. Functionally, catalyzes the transfer of the enolpyruvyl moiety of phosphoenolpyruvate (PEP) to the 5-hydroxyl of shikimate-3-phosphate (S3P) to produce enolpyruvyl shikimate-3-phosphate and inorganic phosphate. The sequence is that of 3-phosphoshikimate 1-carboxyvinyltransferase from Shewanella amazonensis (strain ATCC BAA-1098 / SB2B).